Here is a 385-residue protein sequence, read N- to C-terminus: Mannitol-1-phosphate 5-dehydrogenase (385 aa).

Residue 3–14 (ALHFGAGNIGRG) participates in NAD(+) binding.

This sequence belongs to the mannitol dehydrogenase family.

The catalysed reaction is D-mannitol 1-phosphate + NAD(+) = beta-D-fructose 6-phosphate + NADH + H(+). The chain is Mannitol-1-phosphate 5-dehydrogenase from Pasteurella multocida (strain Pm70).